The sequence spans 408 residues: uncharacterized protein (408 aa).

Belongs to the protein kinase superfamily. ADCK protein kinase family.

This is an uncharacterized protein from Synechocystis sp. (strain ATCC 27184 / PCC 6803 / Kazusa).